The chain runs to 231 residues: Phosphatidylserine decarboxylase proenzyme (231 aa).

Residue Ser-188 is the Schiff-base intermediate with substrate; via pyruvic acid of the active site. Ser-188 is subject to Pyruvic acid (Ser); by autocatalysis.

The protein belongs to the phosphatidylserine decarboxylase family. PSD-A subfamily. Heterodimer of a large membrane-associated beta subunit and a small pyruvoyl-containing alpha subunit. Pyruvate is required as a cofactor. Post-translationally, is synthesized initially as an inactive proenzyme. Formation of the active enzyme involves a self-maturation process in which the active site pyruvoyl group is generated from an internal serine residue via an autocatalytic post-translational modification. Two non-identical subunits are generated from the proenzyme in this reaction, and the pyruvate is formed at the N-terminus of the alpha chain, which is derived from the carboxyl end of the proenzyme. The post-translation cleavage follows an unusual pathway, termed non-hydrolytic serinolysis, in which the side chain hydroxyl group of the serine supplies its oxygen atom to form the C-terminus of the beta chain, while the remainder of the serine residue undergoes an oxidative deamination to produce ammonia and the pyruvoyl prosthetic group on the alpha chain.

It is found in the cell membrane. It carries out the reaction a 1,2-diacyl-sn-glycero-3-phospho-L-serine + H(+) = a 1,2-diacyl-sn-glycero-3-phosphoethanolamine + CO2. It functions in the pathway phospholipid metabolism; phosphatidylethanolamine biosynthesis; phosphatidylethanolamine from CDP-diacylglycerol: step 2/2. Its function is as follows. Catalyzes the formation of phosphatidylethanolamine (PtdEtn) from phosphatidylserine (PtdSer). The polypeptide is Phosphatidylserine decarboxylase proenzyme (Rickettsia felis (strain ATCC VR-1525 / URRWXCal2) (Rickettsia azadi)).